Reading from the N-terminus, the 270-residue chain is MFLAGSFIVLCGLLAQSTAQLAGLPYPLGQDLPMSMGHCRSLHVGQTLPYYGVTPVVSTYPSDHLDRNFRDAFRHGLLSGGILSFLEHIPLLNYVRPTGSNAGGLVGVLGKVISSIPLLNNILDIRVTNPQLLEIGLVQSYDFHRLYVTIPLGFDLRVNTLVVGSLLELSVKLDVTAEVYAVRDSYGRSRLVIGDCIYPPGSLRISLLNRLGPLQNLIDSLTDILTRVIPGLVQGVVCPLVNGVLSLLDVTLAHDVADALLRGVQFVIKT.

The N-terminal stretch at 1-19 (MFLAGSFIVLCGLLAQSTA) is a signal peptide. A disulfide bridge connects residues cysteine 196 and cysteine 238.

Belongs to the BPI/LBP/Plunc superfamily. Plunc family. In terms of tissue distribution, expressed in interpapillar epithelium of the anterior part of the tongue.

The protein resides in the secreted. In terms of biological role, may play a role in innate immunity in the oral cavity. The polypeptide is BPI fold-containing family A member 5 (Bpifa5) (Mus musculus (Mouse)).